We begin with the raw amino-acid sequence, 223 residues long: MEVKDILKTVDHTLLATTATWPEIQTILDDAMAYETASACIPASYVKKAAEYVSGKLAICTVIGFPNGYSTTAAKVFECQDAIKNGADEIDMVINLTDVKNGDFDTVEEEIRQIKAACQDHILKVIVETCQLTKEELIELCGVVTRSGADFIKTSTGFSTAGATFEDVEVMAKYVGEGVKIKAAGGISSLEDAEKFIALGASRLGTSRIIKIVKNQKVEEGTY.

D91 acts as the Proton donor/acceptor in catalysis. Residue K153 is the Schiff-base intermediate with acetaldehyde of the active site. The active-site Proton donor/acceptor is K182.

This sequence belongs to the DeoC/FbaB aldolase family. DeoC type 1 subfamily.

It is found in the cytoplasm. The enzyme catalyses 2-deoxy-D-ribose 5-phosphate = D-glyceraldehyde 3-phosphate + acetaldehyde. The protein operates within carbohydrate degradation; 2-deoxy-D-ribose 1-phosphate degradation; D-glyceraldehyde 3-phosphate and acetaldehyde from 2-deoxy-alpha-D-ribose 1-phosphate: step 2/2. Its function is as follows. Catalyzes a reversible aldol reaction between acetaldehyde and D-glyceraldehyde 3-phosphate to generate 2-deoxy-D-ribose 5-phosphate. The sequence is that of Deoxyribose-phosphate aldolase from Streptococcus agalactiae serotype V (strain ATCC BAA-611 / 2603 V/R).